The following is a 215-amino-acid chain: Phosphatidylserine decarboxylase proenzyme (215 aa).

Serine 183 acts as the Schiff-base intermediate with substrate; via pyruvic acid in catalysis. Serine 183 carries the post-translational modification Pyruvic acid (Ser); by autocatalysis.

The protein belongs to the phosphatidylserine decarboxylase family. PSD-A subfamily. Heterodimer of a large membrane-associated beta subunit and a small pyruvoyl-containing alpha subunit. Requires pyruvate as cofactor. Post-translationally, is synthesized initially as an inactive proenzyme. Formation of the active enzyme involves a self-maturation process in which the active site pyruvoyl group is generated from an internal serine residue via an autocatalytic post-translational modification. Two non-identical subunits are generated from the proenzyme in this reaction, and the pyruvate is formed at the N-terminus of the alpha chain, which is derived from the carboxyl end of the proenzyme. The post-translation cleavage follows an unusual pathway, termed non-hydrolytic serinolysis, in which the side chain hydroxyl group of the serine supplies its oxygen atom to form the C-terminus of the beta chain, while the remainder of the serine residue undergoes an oxidative deamination to produce ammonia and the pyruvoyl prosthetic group on the alpha chain.

The protein localises to the cell membrane. The enzyme catalyses a 1,2-diacyl-sn-glycero-3-phospho-L-serine + H(+) = a 1,2-diacyl-sn-glycero-3-phosphoethanolamine + CO2. The protein operates within phospholipid metabolism; phosphatidylethanolamine biosynthesis; phosphatidylethanolamine from CDP-diacylglycerol: step 2/2. Catalyzes the formation of phosphatidylethanolamine (PtdEtn) from phosphatidylserine (PtdSer). The sequence is that of Phosphatidylserine decarboxylase proenzyme from Symbiobacterium thermophilum (strain DSM 24528 / JCM 14929 / IAM 14863 / T).